Here is a 541-residue protein sequence, read N- to C-terminus: EH domain-containing protein 4 (541 aa).

N-acetylmethionine is present on Met-1. The 232-residue stretch at 58–289 (FENKPMILLV…DLFRDIQSLP (232 aa)) folds into the Dynamin-type G domain. Residues 68 to 75 (GQYSTGKT) form a G1 motif region. Residue 68–75 (GQYSTGKT) participates in ATP binding. The G2 motif stretch occupies residues 94-95 (EP). Positions 156-159 (DSPG) are G3 motif. At Ser-162 the chain carries Phosphoserine. A G4 motif region spans residues 222-225 (NKAD). Residue Lys-223 coordinates ATP. Val-246 is a region of interest (G5 motif). ATP is bound at residue Trp-261. Residues 447-535 (DKPVYDELFY…PHLVPPSHRK (89 aa)) form the EH domain. A Phosphotyrosine modification is found at Tyr-451. The residue at position 459 (Ser-459) is a Phosphoserine. Residues 479–514 (LPNSVLGKIWKLADCDCDGMLDEEEFALAKHLIKIK) enclose the EF-hand domain. Residues Asp-492, Asp-494, Asp-496, Met-498, and Glu-503 each coordinate Ca(2+).

The protein belongs to the TRAFAC class dynamin-like GTPase superfamily. Dynamin/Fzo/YdjA family. EHD subfamily. As to quaternary structure, homooligomer, and heterooligomer with EHD1, EHD2 and EHD3. Forms a complex with EHD4 and MICALL1; the complex controls CDH5 trafficking and coordinates angiogenesis. As to expression, highly expressed in pancreas and heart.

It is found in the early endosome membrane. It localises to the recycling endosome membrane. The protein localises to the cell membrane. The protein resides in the cell junction. Its subcellular location is the adherens junction. ATP- and membrane-binding protein that probably controls membrane reorganization/tubulation upon ATP hydrolysis. Plays a role in early endosomal transport. During sprouting angiogenesis, in complex with PACSIN2 and MICALL1, forms recycling endosome-like tubular structure at asymmetric adherens junctions to control CDH5 trafficking. This Homo sapiens (Human) protein is EH domain-containing protein 4.